The following is a 485-amino-acid chain: Glutamyl-tRNA(Gln) amidotransferase subunit A (485 aa).

Active-site charge relay system residues include lysine 79 and serine 154. The active-site Acyl-ester intermediate is the serine 178.

It belongs to the amidase family. GatA subfamily. As to quaternary structure, heterotrimer of A, B and C subunits.

It catalyses the reaction L-glutamyl-tRNA(Gln) + L-glutamine + ATP + H2O = L-glutaminyl-tRNA(Gln) + L-glutamate + ADP + phosphate + H(+). In terms of biological role, allows the formation of correctly charged Gln-tRNA(Gln) through the transamidation of misacylated Glu-tRNA(Gln) in organisms which lack glutaminyl-tRNA synthetase. The reaction takes place in the presence of glutamine and ATP through an activated gamma-phospho-Glu-tRNA(Gln). The polypeptide is Glutamyl-tRNA(Gln) amidotransferase subunit A (Geobacillus kaustophilus (strain HTA426)).